The chain runs to 314 residues: ATP synthase gamma chain (314 aa).

It belongs to the ATPase gamma chain family. As to quaternary structure, F-type ATPases have 2 components, CF(1) - the catalytic core - and CF(0) - the membrane proton channel. CF(1) has five subunits: alpha(3), beta(3), gamma(1), delta(1), epsilon(1). CF(0) has three main subunits: a, b and c.

Its subcellular location is the cellular thylakoid membrane. Its function is as follows. Produces ATP from ADP in the presence of a proton gradient across the membrane. The gamma chain is believed to be important in regulating ATPase activity and the flow of protons through the CF(0) complex. The polypeptide is ATP synthase gamma chain (Synechocystis sp. (strain ATCC 27184 / PCC 6803 / Kazusa)).